A 242-amino-acid chain; its full sequence is Response regulator GtcR (242 aa).

The region spanning 4–117 (TILIADDEPE…EAVARIQAQL (114 aa)) is the Response regulatory domain. D53 bears the 4-aspartylphosphate mark. A DNA-binding region (ompR/PhoB-type) is located at residues 133–233 (TQSTTVGRLT…VRGLGYKFAS (101 aa)).

Phosphorylated by GtcS.

Member of the two-component regulatory system GtcS/GtcR which may act in the control of the transcription of the grs operon which encodes the multienzymes involved in the biosynthesis of the peptide antibiotic gramicidin S. In Aneurinibacillus migulanus (Bacillus migulanus), this protein is Response regulator GtcR (gtcR).